The primary structure comprises 751 residues: MESSLIHHIIIVLLLLWFISSLNRSHAFFYFLALIYLYLVHERYVMRLKRKLQFEERKQANQRRVLSDSESVRWMNYAVEKIWPICMEQIASQKILGPIIPWFLEKYRPWTAKKAVIQHLYMGRNPPLLTDIRVLRQSTGDDHLVLELGMNFLAADDMSAILAVKLRKRLGFGMWTKLHLTGMHVEGKVLIGVKFLRRWPFLGRLRVCFAEPPYFQMTVKPIFTHGLDVAVLPGIAGWLDKLLSIAFEQTLVQPNMLVVDMEKFVSPTSENWFFVDEKEPVAHVLVEVFEASDLKPSDLNGLADPYVKGKLGAYRFKTKIQKKTLSPKWHEEFKIPIFTWDSPSILNIEVGDKDRFVDDTLGECSVNIEEFRGGQRNDMWLSLQNIKMGRLHLAITVIEDNAKSSDDPLKKAKLNKEDIQTSFASDTTNLGSFSSDKSPSVVDNFEPIKIDGQEETAIWVQKPGAEVSQIWEPRKGKSRRLDSQIQRTPNDESLSNGSSSTDDNQEGSKNPMKSVGRGLRKIGSMFHRNVKKEEFLIGSIEEESQSQSPRINLKAVNQKDVGLNFIVDDNLSGPLSGKSLDGESLDAEENSGKGHMKDVAKSFLKQAEKSAKQIKHAFSRKGSMKPRDGHKEIVPESDSGTDSESSDDDDAFTCVKNLATEPGKLTRDGNIERTGDDDHVDSTTLATAKEDSSGDILEDSTDVEAKEEKLKEAAESETRDMDTAMNIKTEDEKGDTLKNIEEGEEKESSSK.

The next 2 membrane-spanning stretches (helical) occupy residues 2-22 (ESSLIHHIIIVLLLLWFISSL) and 26-46 (HAFFYFLALIYLYLVHERYVM). One can recognise an SMP-LTD domain in the interval 68-262 (DSESVRWMNY…QPNMLVVDME (195 aa)). Residues 267–381 (PTSENWFFVD…RGGQRNDMWL (115 aa)) form the C2 domain. Ca(2+) is bound by residues aspartate 298, aspartate 304, aspartate 352, aspartate 354, and aspartate 359. 2 disordered regions span residues 469-519 (QIWE…GRGL) and 572-751 (SGPL…SSSK). Positions 472–482 (EPRKGKSRRLD) are enriched in basic and acidic residues. Residues 483–502 (SQIQRTPNDESLSNGSSSTD) are compositionally biased toward polar residues. Positions 590-611 (NSGKGHMKDVAKSFLKQAEKSA) are enriched in basic and acidic residues. Residues 612–624 (KQIKHAFSRKGSM) show a composition bias toward basic residues. The span at 625–634 (KPRDGHKEIV) shows a compositional bias: basic and acidic residues. Over residues 639 to 651 (SGTDSESSDDDDA) the composition is skewed to acidic residues. Basic and acidic residues-rich tracts occupy residues 664 to 681 (KLTRDGNIERTGDDDHVD) and 703 to 751 (VEAK…SSSK). Residues 701–728 (TDVEAKEEKLKEAAESETRDMDTAMNIK) are a coiled coil.

Belongs to the extended synaptotagmin family. It depends on Ca(2+) as a cofactor.

It is found in the membrane. The protein is C2 domain-containing protein At1g53590 (NTMC2T6.1) of Arabidopsis thaliana (Mouse-ear cress).